The sequence spans 144 residues: Large ribosomal subunit protein uL16 (144 aa).

Belongs to the universal ribosomal protein uL16 family. Part of the 50S ribosomal subunit.

In terms of biological role, binds 23S rRNA and is also seen to make contacts with the A and possibly P site tRNAs. This Acidobacterium capsulatum (strain ATCC 51196 / DSM 11244 / BCRC 80197 / JCM 7670 / NBRC 15755 / NCIMB 13165 / 161) protein is Large ribosomal subunit protein uL16.